We begin with the raw amino-acid sequence, 325 residues long: Hydroxymethylglutaryl-CoA lyase, mitochondrial (325 aa).

The N-terminal 27 residues, 1 to 27 (MATVKKVLPRRLVGLATLRAVSTSSVG), are a transit peptide targeting the mitochondrion. The Pyruvate carboxyltransferase domain occupies 33–300 (VKIVEVGPRD…HTGVNLQKLL (268 aa)). Residue Arg41 participates in substrate binding. Asp42 provides a ligand contact to a divalent metal cation. Lys48 bears the N6-acetyllysine; alternate mark. Lys48 is modified (N6-succinyllysine; alternate). The residue at position 111 (Lys111) is an N6-acetyllysine. Lys137 and Lys179 each carry N6-acetyllysine; alternate. N6-succinyllysine; alternate occurs at positions 137 and 179. A divalent metal cation-binding residues include His233 and His235. Residue Cys266 is part of the active site. A divalent metal cation is bound at residue Asn275. The short motif at 323–325 (CKL) is the Microbody targeting signal element. Lys324 is modified (N6-acetyllysine).

The protein belongs to the HMG-CoA lyase family. Homodimer; disulfide-linked. Can also form homotetramers.

The protein localises to the mitochondrion matrix. The protein resides in the peroxisome. It carries out the reaction (3S)-3-hydroxy-3-methylglutaryl-CoA = acetoacetate + acetyl-CoA. The protein operates within metabolic intermediate metabolism; (S)-3-hydroxy-3-methylglutaryl-CoA degradation; acetoacetate from (S)-3-hydroxy-3-methylglutaryl-CoA: step 1/1. Mitochondrial 3-hydroxy-3-methylglutaryl-CoA lyase that catalyzes a cation-dependent cleavage of (S)-3-hydroxy-3-methylglutaryl-CoA into acetyl-CoA and acetoacetate, a key step in ketogenesis. Terminal step in leucine catabolism. Ketone bodies (beta-hydroxybutyrate, acetoacetate and acetone) are essential as an alternative source of energy to glucose, as lipid precursors and as regulators of metabolism. The protein is Hydroxymethylglutaryl-CoA lyase, mitochondrial (HMGCL) of Bos taurus (Bovine).